The chain runs to 344 residues: Methionine import ATP-binding protein MetN (344 aa).

The ABC transporter domain maps to 2–241 (IKLEKISKIF…PQTQLAKEFI (240 aa)). Residue 38-45 (GASGAGKS) participates in ATP binding.

The protein belongs to the ABC transporter superfamily. Methionine importer (TC 3.A.1.24) family. As to quaternary structure, the complex is composed of two ATP-binding proteins (MetN), two transmembrane proteins (MetI) and a solute-binding protein (MetQ).

The protein resides in the cell inner membrane. The catalysed reaction is L-methionine(out) + ATP + H2O = L-methionine(in) + ADP + phosphate + H(+). The enzyme catalyses D-methionine(out) + ATP + H2O = D-methionine(in) + ADP + phosphate + H(+). In terms of biological role, part of the ABC transporter complex MetNIQ involved in methionine import. Responsible for energy coupling to the transport system. This Pasteurella multocida (strain Pm70) protein is Methionine import ATP-binding protein MetN.